Here is a 242-residue protein sequence, read N- to C-terminus: uncharacterized protein (242 aa).

2 consecutive transmembrane segments (helical) span residues 4–24 (NYQVSLIFSVIYVVTNSYYVV) and 34–54 (LLFGSFYLTMEVFQTLQWLFG). N73 is a glycosylation site (N-linked (GlcNAc...) asparagine; by host). Helical transmembrane passes span 74–94 (YTIVAFILIWLQPILFSVIGY), 106–126 (VLTVLNCFVFFYGLKLLYGGF), and 162–182 (LDVFPNHLTYIILCIISFVMY). The N-linked (GlcNAc...) asparagine; by host glycan is linked to N185. A run of 2 helical transmembrane segments spans residues 189–209 (VIGLGWLLSLIVTKLLLAPTL) and 217–237 (CLLSIIANLLIVAYVHISTGI).

It is found in the membrane. This is an uncharacterized protein from Acanthamoeba polyphaga mimivirus (APMV).